Here is a 428-residue protein sequence, read N- to C-terminus: MCDVVLGSQWGDEGKGKLVDILCDDIDVCARCAGGNNAGHTIVVDGKKFDFHMLPSGLVNPKCQNLVGSGVVIHVPSFFEELKNIEEKGLHCRDRLKVSSRAHLVFDFHQRTDKLKEAELSENKKSIGTTGKGIGPTYSTKASRSGIRVHHLVNSNPEAWNEFKTRYMRLVESRQKRYGEFDYDYEAELAKYEKYREELRPFVVDSVEFMHEAIAQKKKILVEGANALMLDIDFGTYPYVTSSSTGIGGVLTGLGIPPKTIRNIYGVVKAYTTRVGEGPFPTEQLNSVGETLQDVGAEYGVTTGRKRRCGWLDLVVLKYSTLINGYTSLNITKLDVLDKFKEIQVGIAYKLNGKELKSFPEDLIDLGNVEVVYKTLPGWEQDITKIKKYEDLPENAKNYLKYIEDFLGVPIQWVGTGPARDSMLEKKI.

GTP contacts are provided by residues 11-17 and 39-41; these read GDEGKGK and GHT. D12 functions as the Proton acceptor in the catalytic mechanism. The Mg(2+) site is built by D12 and G39. IMP-binding positions include 12-15, 37-40, T130, R144, N226, T241, and R305; these read DEGK and NAGH. H40 serves as the catalytic Proton donor. 301–307 serves as a coordination point for substrate; it reads VTTGRKR. GTP contacts are provided by residues R307, 333-335, and 415-417; these read KLD and GTG.

Belongs to the adenylosuccinate synthetase family. Homodimer. Mg(2+) serves as cofactor.

Its subcellular location is the cytoplasm. The enzyme catalyses IMP + L-aspartate + GTP = N(6)-(1,2-dicarboxyethyl)-AMP + GDP + phosphate + 2 H(+). The protein operates within purine metabolism; AMP biosynthesis via de novo pathway; AMP from IMP: step 1/2. Its function is as follows. Plays an important role in the de novo pathway and in the salvage pathway of purine nucleotide biosynthesis. Catalyzes the first committed step in the biosynthesis of AMP from IMP. This chain is Adenylosuccinate synthetase, found in Lodderomyces elongisporus (strain ATCC 11503 / CBS 2605 / JCM 1781 / NBRC 1676 / NRRL YB-4239) (Yeast).